The primary structure comprises 481 residues: NADH-quinone oxidoreductase subunit N (481 aa).

The next 14 helical transmembrane spans lie at 11–31 (AIPE…DLFW), 38–58 (LAAV…VFEM), 69–89 (FVLD…VLMV), 107–127 (VFVL…GGSL), 128–148 (LSVY…VAFY), 162–182 (FVLG…LYGL), 203–223 (LVLV…LGAA), 237–257 (PTVV…ALII), 271–291 (WQQI…VIAI), 299–319 (MLAY…VAGT), 327–347 (FFYT…ILLV), 370–390 (YAFL…TVGF), 401–421 (VAAG…IGAF), and 457–477 (LALL…FYAM).

This sequence belongs to the complex I subunit 2 family. In terms of assembly, NDH-1 is composed of 14 different subunits. Subunits NuoA, H, J, K, L, M, N constitute the membrane sector of the complex.

The protein localises to the cell inner membrane. The catalysed reaction is a quinone + NADH + 5 H(+)(in) = a quinol + NAD(+) + 4 H(+)(out). In terms of biological role, NDH-1 shuttles electrons from NADH, via FMN and iron-sulfur (Fe-S) centers, to quinones in the respiratory chain. The immediate electron acceptor for the enzyme in this species is believed to be ubiquinone. Couples the redox reaction to proton translocation (for every two electrons transferred, four hydrogen ions are translocated across the cytoplasmic membrane), and thus conserves the redox energy in a proton gradient. This Acidithiobacillus ferrooxidans (strain ATCC 23270 / DSM 14882 / CIP 104768 / NCIMB 8455) (Ferrobacillus ferrooxidans (strain ATCC 23270)) protein is NADH-quinone oxidoreductase subunit N.